The sequence spans 445 residues: Glycine betaine monooxygenase oxygenase subunit (445 aa).

The region spanning 73–180 (WLFVGMTCEI…VTHAGGFLFV (108 aa)) is the Rieske domain. Residues Cys115, His117, Cys135, and His138 each contribute to the [2Fe-2S] cluster site. Fe cation-binding residues include His234 and His239.

This sequence belongs to the bacterial ring-hydroxylating dioxygenase alpha subunit family. In terms of assembly, homotrimer. The system is composed of an oxygenase subunit (BmoA) and a reductase subunit (BmoB). Maximal specific activity is obtained when the ratio of BmoA to BmoB is 5:1. The cofactor is [2Fe-2S] cluster. Fe cation is required as a cofactor.

The enzyme catalyses glycine betaine + NADH + O2 + H(+) = N,N-dimethylglycine + formaldehyde + NAD(+) + H2O. Activity is absolutely dependent on the presence of BmoB. Glycine betaine monooxygenase activity is significantly enhanced by Fe(2+) and severely inhibited by heavy-metal ions, including Co(2+), Mn(2+), Zn(2+), Cu(2+) and Ag(+). Severely inhibited by EDTA. Its function is as follows. Involved in degradation of glycine betaine. Part of a Rieske-type oxygenase system that catalyzes the conversion of glycine betaine (GB) to dimethylglycine (DMG). This subunit is the terminal oxygenase component of the system. Is specific for GB, and does not show any activity on choline, L-carnitine, stachydrine, dimethylglycine or sarcosine. Activity is strictly dependent on NADH. The polypeptide is Glycine betaine monooxygenase oxygenase subunit (Chromohalobacter salexigens (strain ATCC BAA-138 / DSM 3043 / CIP 106854 / NCIMB 13768 / 1H11)).